The sequence spans 141 residues: MAVQRTFSIIKPDAVAKNVIGEITTRFEKAGLKVVASKLKQLSKAEAEGFYAEHSARGFFGDLVAFMISGPVVVQVLEGENAIALNRELMGATNPKEAAAGTIRADFAESIDANAVHGSDSEAAAAREISYFFAATEVTAR.

ATP-binding residues include Lys11, Phe59, Arg87, Thr93, Arg104, and Asn114. His117 functions as the Pros-phosphohistidine intermediate in the catalytic mechanism.

This sequence belongs to the NDK family. As to quaternary structure, homotetramer. Requires Mg(2+) as cofactor.

The protein localises to the cytoplasm. The catalysed reaction is a 2'-deoxyribonucleoside 5'-diphosphate + ATP = a 2'-deoxyribonucleoside 5'-triphosphate + ADP. It carries out the reaction a ribonucleoside 5'-diphosphate + ATP = a ribonucleoside 5'-triphosphate + ADP. Its function is as follows. Major role in the synthesis of nucleoside triphosphates other than ATP. The ATP gamma phosphate is transferred to the NDP beta phosphate via a ping-pong mechanism, using a phosphorylated active-site intermediate. The sequence is that of Nucleoside diphosphate kinase from Pseudomonas fluorescens (strain SBW25).